The chain runs to 292 residues: MKLHFTKMHGAGNDFVVLDGIATPIDFTPEQWRAIADRHFGVGADQLLLVERSTRPDVDFRYRIFNHDGGEVEQCGNGARCFVKFVTDRGLTDKRTIRVEVMNGISTLTMQPDGQVTVDMGAPVFEAARLPFVPDALPTRVEGRDTQHALQINGRTAWLSTVSMGNPHAVQVVDDAEAFPVREDGPLIESHAVFPRRVNAGFMEIADRHAIRLRVYERGAGETLACGTGACAAAVAGIRRGLLDSPVKVTTHGGDLTIAWAGEGEPVMMTGPATTVFEGTLDLDALKQTAAH.

N13, Q46, and N66 together coordinate substrate. C75 acts as the Proton donor in catalysis. Substrate contacts are provided by residues 76-77 (GN), N166, N199, and 217-218 (ER). Catalysis depends on C226, which acts as the Proton acceptor. Substrate is bound at residue 227 to 228 (GT).

Belongs to the diaminopimelate epimerase family. Homodimer.

It is found in the cytoplasm. It carries out the reaction (2S,6S)-2,6-diaminopimelate = meso-2,6-diaminopimelate. Its pathway is amino-acid biosynthesis; L-lysine biosynthesis via DAP pathway; DL-2,6-diaminopimelate from LL-2,6-diaminopimelate: step 1/1. Functionally, catalyzes the stereoinversion of LL-2,6-diaminopimelate (L,L-DAP) to meso-diaminopimelate (meso-DAP), a precursor of L-lysine and an essential component of the bacterial peptidoglycan. This Ralstonia nicotianae (strain ATCC BAA-1114 / GMI1000) (Ralstonia solanacearum) protein is Diaminopimelate epimerase.